Here is a 199-residue protein sequence, read N- to C-terminus: N-(5'-phosphoribosyl)anthranilate isomerase (199 aa).

This sequence belongs to the TrpF family.

It catalyses the reaction N-(5-phospho-beta-D-ribosyl)anthranilate = 1-(2-carboxyphenylamino)-1-deoxy-D-ribulose 5-phosphate. The protein operates within amino-acid biosynthesis; L-tryptophan biosynthesis; L-tryptophan from chorismate: step 3/5. The chain is N-(5'-phosphoribosyl)anthranilate isomerase from Solibacter usitatus (strain Ellin6076).